A 466-amino-acid chain; its full sequence is MITLYNTLTRQKETFEPIEPGKVKMYVCGPTVYNYIHIGNARPAINYDVVRRYFEYKGYEVIYVSNFTDVDDKLINRSKELNESVPDIADRYIKAFYEDVGALNVKKATSNPRVMNHMDEIIDFIKELVDEGYAYESDGDVYFRTRKFEGYGKLSHQSLDDLKVGARIEAGEQKEDALDFTLWKKAKPGEISWESPFGEGRPGWHIECSVMAFHELGKTIDIHAGGSDLQFPHHENEIAQSEAHNHAPFANYWMHNGFINIDNEKMSKSLGNFILVHDIIKEVDPDVLRFFMISVHYRSPINYNLELVNAAKSGLERIRNSYQLIEERETIATDIVDQSKYIEQIDAIIEQFETVMDDDFNTANAVTAWYDLSKLANKYVLENNTSTQVISRFKEVYQIFSDVLGVPLKGNKSDMLLDEDIEKLIEERNEARKNKDFARADEIRDMLKEQNIILEDTPQGVRFKRG.

Cys-28 serves as a coordination point for Zn(2+). The 'HIGH' region signature appears at 30–40 (PTVYNYIHIGN). 3 residues coordinate Zn(2+): Cys-208, His-233, and Glu-237. The short motif at 265 to 269 (KMSKS) is the 'KMSKS' region element. Lys-268 is an ATP binding site.

Belongs to the class-I aminoacyl-tRNA synthetase family. As to quaternary structure, monomer. Requires Zn(2+) as cofactor.

The protein localises to the cytoplasm. It catalyses the reaction tRNA(Cys) + L-cysteine + ATP = L-cysteinyl-tRNA(Cys) + AMP + diphosphate. This Staphylococcus haemolyticus (strain JCSC1435) protein is Cysteine--tRNA ligase.